The chain runs to 212 residues: FMN-dependent NADH:quinone oxidoreductase (212 aa).

FMN-binding positions include serine 10, 16–18, and 98–101; these read SFS and MWNF.

This sequence belongs to the azoreductase type 1 family. As to quaternary structure, homodimer. Requires FMN as cofactor.

It catalyses the reaction 2 a quinone + NADH + H(+) = 2 a 1,4-benzosemiquinone + NAD(+). It carries out the reaction N,N-dimethyl-1,4-phenylenediamine + anthranilate + 2 NAD(+) = 2-(4-dimethylaminophenyl)diazenylbenzoate + 2 NADH + 2 H(+). Its function is as follows. Quinone reductase that provides resistance to thiol-specific stress caused by electrophilic quinones. In terms of biological role, also exhibits azoreductase activity. Catalyzes the reductive cleavage of the azo bond in aromatic azo compounds to the corresponding amines. This is FMN-dependent NADH:quinone oxidoreductase from Desulfotalea psychrophila (strain LSv54 / DSM 12343).